A 1117-amino-acid chain; its full sequence is Telomerase reverse transcriptase (1117 aa).

The segment at methionine 1–asparagine 191 is TEN. The RBD stretch occupies residues asparagine 217–leucine 519. A Reverse transcriptase domain is found at glutamate 517 to isoleucine 881. The RT stretch occupies residues isoleucine 520–glutamate 887. Aspartate 618 contacts Mg(2+). The segment at serine 638–lysine 742 is TRAP. Mg(2+)-binding residues include aspartate 815 and aspartate 816. The tract at residues isoleucine 888 to asparagine 1117 is CTE.

Belongs to the reverse transcriptase family. Telomerase subfamily. As to quaternary structure, component of the telomerase holoenzyme complex, composed of the catalytic core (the catalytic subunit TERT, the telomerase RNA template component TER and TAP65/p65), which is associated with two heterotrimeric subcomplexes: (i) the replication protein A (RPA)-related subcomplex, composed of TEB1, RPA2/TEB2 and RPA3/TEB3 and (ii) the CST-like subcomplex, composed of TAP75/p75, TAP45/p45 and TAP19/p19. TEB1 and the CST-like subcomplex are tethered to the catalytic core by TAP50/p50.

The protein localises to the nucleus. It is found in the chromosome. Its subcellular location is the telomere. The catalysed reaction is DNA(n) + a 2'-deoxyribonucleoside 5'-triphosphate = DNA(n+1) + diphosphate. Functionally, catalytic component of telomerase, an essential ribonucleoprotein enzyme that copies new telomeric repeats onto chromosome ends by repetitively synthesizing the short telomere-repeat sequence 5'-TTGGGG-3' using an RNA template component TER. TERT is a reverse transcriptase that adds simple sequence repeats to chromosome ends by copying a template sequence within the RNA component of the enzyme. The sequence is that of Telomerase reverse transcriptase from Tetrahymena thermophila (strain SB210).